We begin with the raw amino-acid sequence, 379 residues long: Dual-specificity RNA methyltransferase RlmN (379 aa).

Glu96 acts as the Proton acceptor in catalysis. One can recognise a Radical SAM core domain in the interval 102–342 (TDDRGTLCVS…TRTTRGDDID (241 aa)). A disulfide bond links Cys109 and Cys345. Positions 116, 120, and 123 each coordinate [4Fe-4S] cluster. S-adenosyl-L-methionine contacts are provided by residues 170–171 (GE), Ser202, 224–226 (SLH), and Asn302. The S-methylcysteine intermediate role is filled by Cys345.

This sequence belongs to the radical SAM superfamily. RlmN family. [4Fe-4S] cluster serves as cofactor.

It is found in the cytoplasm. It catalyses the reaction adenosine(2503) in 23S rRNA + 2 reduced [2Fe-2S]-[ferredoxin] + 2 S-adenosyl-L-methionine = 2-methyladenosine(2503) in 23S rRNA + 5'-deoxyadenosine + L-methionine + 2 oxidized [2Fe-2S]-[ferredoxin] + S-adenosyl-L-homocysteine. The enzyme catalyses adenosine(37) in tRNA + 2 reduced [2Fe-2S]-[ferredoxin] + 2 S-adenosyl-L-methionine = 2-methyladenosine(37) in tRNA + 5'-deoxyadenosine + L-methionine + 2 oxidized [2Fe-2S]-[ferredoxin] + S-adenosyl-L-homocysteine. Specifically methylates position 2 of adenine 2503 in 23S rRNA and position 2 of adenine 37 in tRNAs. m2A2503 modification seems to play a crucial role in the proofreading step occurring at the peptidyl transferase center and thus would serve to optimize ribosomal fidelity. The protein is Dual-specificity RNA methyltransferase RlmN of Pseudomonas entomophila (strain L48).